The following is a 642-amino-acid chain: Zinc finger protein 398 (642 aa).

Disordered regions lie at residues 1-24 (MAEAAPAPTSEWDSECLTSLQPLP) and 198-225 (EGEHNTEDQAGPEESEIPTDPSEEPGIS). The KRAB domain maps to 143–214 (VAFDDVSIYF…DQAGPEESEI (72 aa)). Over residues 207–220 (AGPEESEIPTDPSE) the composition is skewed to acidic residues. A Glycyl lysine isopeptide (Lys-Gly) (interchain with G-Cter in SUMO2) cross-link involves residue Lys-265. Residues 343–364 (FSCHHCGKNLSQDMLLTHQCSH) form a C2H2-type 1; atypical zinc finger. The C2H2-type 2; degenerate zinc finger occupies 370–392 (LPCAQCPKHFTPQADLSSTSQDH). 7 consecutive C2H2-type zinc fingers follow at residues 398–420 (PTCPHCARTFTHPSRLTYHLRVH), 427–449 (FPCPDCPKRFADQARLTSHRRAH), 455–477 (FRCAQCGRSFSLKISLLLHQRGH), 483–505 (FSCPQCGIDFNGHSALIRHQMIH), 511–533 (YPCTDCSKSFMRKEHLLNHRRLH), 539–561 (FSCPHCGKSFIRKHHLMKHQRIH), and 567–590 (YPCSYCGRSFRYKQTLKDHLRSGH). The tract at residues 587–615 (RSGHNGGCGGDSDPSGQPPNPPGPLITGL) is disordered.

Belongs to the krueppel C2H2-type zinc-finger protein family.

It localises to the nucleus. Its function is as follows. Functions as a transcriptional activator. The polypeptide is Zinc finger protein 398 (ZNF398) (Homo sapiens (Human)).